The primary structure comprises 118 residues: Protein MT2260 (118 aa).

The protein belongs to the HesB/IscA family.

The sequence is that of Protein MT2260 from Mycobacterium tuberculosis (strain CDC 1551 / Oshkosh).